The primary structure comprises 146 residues: Cyanate hydratase (146 aa).

Catalysis depends on residues R87, E90, and S113.

This sequence belongs to the cyanase family.

The catalysed reaction is cyanate + hydrogencarbonate + 3 H(+) = NH4(+) + 2 CO2. Catalyzes the reaction of cyanate with bicarbonate to produce ammonia and carbon dioxide. The chain is Cyanate hydratase from Pseudomonas putida (strain ATCC 700007 / DSM 6899 / JCM 31910 / BCRC 17059 / LMG 24140 / F1).